A 499-amino-acid chain; its full sequence is Glutamyl-tRNA(Gln) amidotransferase subunit A, mitochondrial (499 aa).

Catalysis depends on charge relay system residues K61 and S139. The active-site Acyl-ester intermediate is the S163.

This sequence belongs to the amidase family. GatA subfamily. As to quaternary structure, subunit of the heterotrimeric GatCAB amidotransferase (AdT) complex, composed of A, B and C subunits.

The protein localises to the mitochondrion. It carries out the reaction L-glutamyl-tRNA(Gln) + L-glutamine + ATP + H2O = L-glutaminyl-tRNA(Gln) + L-glutamate + ADP + phosphate + H(+). Its function is as follows. Allows the formation of correctly charged Gln-tRNA(Gln) through the transamidation of misacylated Glu-tRNA(Gln) in the mitochondria. The reaction takes place in the presence of glutamine and ATP through an activated gamma-phospho-Glu-tRNA(Gln). In Coccidioides posadasii (strain C735) (Valley fever fungus), this protein is Glutamyl-tRNA(Gln) amidotransferase subunit A, mitochondrial.